The sequence spans 1136 residues: Rho GTPase-activating protein 45 (1136 aa).

Disordered regions lie at residues 1-73 (MFSR…RHAS) and 91-110 (HRSP…GAGP). Phosphoserine is present on residues S23, S25, S73, S93, and S99. The F-BAR domain occupies 269–539 (EEVDVLLQRC…SSKLYDPGQQ (271 aa)). Coiled coils occupy residues 376–412 (EHEK…YVQR) and 440–499 (TATK…RQSD). Phosphoserine occurs at positions 569, 578, 592, and 619. The segment at 583 to 662 (DVARPEAAGS…SSTEELVDPD (80 aa)) is disordered. Low complexity predominate over residues 646–655 (TSSSGTMSST). Residues 702 to 747 (THRLRKLRTPAKCRECNSYVYFQGAECEECCLACHKKCLETLAIQC) form a Phorbol-ester/DAG-type zinc finger. Residues 761–974 (QDFSHAARSA…TLIVHYGLVF (214 aa)) enclose the Rho-GAP domain. 4 positions are modified to phosphoserine: S949, S1027, S1030, and S1032. The disordered stretch occupies residues 1061-1136 (EASLEVASGS…SCRERQPEFV (76 aa)). Residues 1095–1109 (QQLSGFNTNQSNNVL) are compositionally biased toward polar residues.

As to quaternary structure, HA-1 forms a complex with MHC class I HLA-A*0201. Expressed on cells of the hematopoietic lineage. Detected in dendritic cells and epidermal Langerhans cells. Expressed in peripheral blood mononuclear cells, in all leukemia/lymphoma cell lines. Detected also in some solid tumors and tissues such as cancerous and non-cancerous tissue.

The protein localises to the cytoplasm. It is found in the cell projection. Its subcellular location is the ruffle membrane. Contains a GTPase activator for the Rho-type GTPases (RhoGAP) domain that would be able to negatively regulate the actin cytoskeleton as well as cell spreading. However, also contains N-terminally a BAR-domin which is able to play an autoinhibitory effect on this RhoGAP activity. Functionally, precursor of the histocompatibility antigen HA-1. More generally, minor histocompatibility antigens (mHags) refer to immunogenic peptide which, when complexed with MHC, can generate an immune response after recognition by specific T-cells. The peptides are derived from polymorphic intracellular proteins, which are cleaved by normal pathways of antigen processing. The binding of these peptides to MHC class I or class II molecules and its expression on the cell surface can stimulate T-cell responses and thereby trigger graft rejection or graft-versus-host disease (GVHD) after hematopoietic stem cell transplantation from HLA-identical sibling donor. GVHD is a frequent complication after bone marrow transplantation (BMT), due to mismatch of minor histocompatibility antigen in HLA-matched sibling marrow transplants. Specifically, mismatching for mHag HA-1 which is recognized as immunodominant, is shown to be associated with the development of severe GVHD after HLA-identical BMT. HA-1 is presented to the cell surface by MHC class I HLA-A*0201, but also by other HLA-A alleles. This complex specifically elicits donor-cytotoxic T-lymphocyte (CTL) reactivity against hematologic malignancies after treatment by HLA-identical allogenic BMT. It induces cell recognition and lysis by CTL. This is Rho GTPase-activating protein 45 from Homo sapiens (Human).